The sequence spans 338 residues: Putative peptide import ATP-binding protein BMEII0863 (338 aa).

Residues 10 to 263 (KGLRTVFRTR…PRHPYTMGLL (254 aa)) form the ABC transporter domain. ATP is bound at residue 43 to 50 (GESGSGKS).

This sequence belongs to the ABC transporter superfamily. The complex is composed of two ATP-binding proteins (BMEII0863 and BMEII0864), two transmembrane proteins (BMEII0860 and BMEII0861) and a solute-binding protein (BMEII0859).

It localises to the cell inner membrane. Functionally, probably part of an ABC transporter complex that could be involved in peptide import. Probably responsible for energy coupling to the transport system. This Brucella melitensis biotype 1 (strain ATCC 23456 / CCUG 17765 / NCTC 10094 / 16M) protein is Putative peptide import ATP-binding protein BMEII0863.